Here is a 168-residue protein sequence, read N- to C-terminus: N-alpha-acetyltransferase (168 aa).

The N-acetyltransferase domain occupies 13–168; sequence YQIRLATLSD…EDAYLMAAPL (156 aa). Tyr38 is a binding site for substrate. Residue His89 participates in Zn(2+) binding. Acetyl-CoA-binding positions include 93 to 95 and 101 to 106; these read IAV and KIGVGT. CoA is bound by residues 93–95 and 101–106; these read IAV and KIGVGT. Glu128 is a binding site for Zn(2+). Acetyl-CoA contacts are provided by residues Asn133 and 140–142; that span reads YKK. A CoA-binding site is contributed by Asn133. Residue Tyr155 coordinates substrate.

This sequence belongs to the acetyltransferase family. ARD1 subfamily. As to quaternary structure, homodimer.

It is found in the cytoplasm. It catalyses the reaction N-terminal L-alanyl-[protein] + acetyl-CoA = N-terminal N(alpha)-acetyl-L-alanyl-[protein] + CoA + H(+). It carries out the reaction N-terminal L-seryl-[protein] + acetyl-CoA = N-terminal N(alpha)-acetyl-L-seryl-[protein] + CoA + H(+). The enzyme catalyses N-terminal L-methionyl-L-leucyl-[protein] + acetyl-CoA = N-terminal N(alpha)-acetyl-L-methionyl-L-leucyl-[protein] + CoA + H(+). The catalysed reaction is N-terminal L-methionyl-L-glutamyl-[protein] + acetyl-CoA = N-terminal N(alpha)-acetyl-L-methionyl-L-glutamyl-[protein] + CoA + H(+). Displays alpha (N-terminal) acetyltransferase activity. Catalyzes the covalent attachment of an acetyl moiety from acetyl-CoA to the free alpha-amino group at the N-terminus of a protein. This chain is N-alpha-acetyltransferase, found in Sulfolobus acidocaldarius (strain ATCC 33909 / DSM 639 / JCM 8929 / NBRC 15157 / NCIMB 11770).